Reading from the N-terminus, the 545-residue chain is Probable sucrose-6-phosphate hydrolase (545 aa).

Substrate-binding positions include L107–D110, Q126, F169–S170, R230–D231, and E285. D110 is a catalytic residue.

The protein belongs to the glycosyl hydrolase 32 family.

It localises to the cytoplasm. It catalyses the reaction Hydrolysis of terminal non-reducing beta-D-fructofuranoside residues in beta-D-fructofuranosides.. Its pathway is glycan biosynthesis; sucrose metabolism. Its function is as follows. Enables the bacterium to metabolize sucrose as a sole carbon source. This is Probable sucrose-6-phosphate hydrolase from Psychromonas ingrahamii (strain DSM 17664 / CCUG 51855 / 37).